The chain runs to 400 residues: Tryptophan synthase beta chain (400 aa).

Lysine 95 carries the N6-(pyridoxal phosphate)lysine modification.

It belongs to the TrpB family. In terms of assembly, tetramer of two alpha and two beta chains. Pyridoxal 5'-phosphate is required as a cofactor.

It catalyses the reaction (1S,2R)-1-C-(indol-3-yl)glycerol 3-phosphate + L-serine = D-glyceraldehyde 3-phosphate + L-tryptophan + H2O. It participates in amino-acid biosynthesis; L-tryptophan biosynthesis; L-tryptophan from chorismate: step 5/5. The beta subunit is responsible for the synthesis of L-tryptophan from indole and L-serine. This chain is Tryptophan synthase beta chain, found in Chlorobaculum tepidum (strain ATCC 49652 / DSM 12025 / NBRC 103806 / TLS) (Chlorobium tepidum).